The primary structure comprises 105 residues: Nucleoid-associated protein TTHA1599 (105 aa).

Belongs to the YbaB/EbfC family. Homodimer.

Its subcellular location is the cytoplasm. The protein localises to the nucleoid. In terms of biological role, binds to DNA and alters its conformation. May be involved in regulation of gene expression, nucleoid organization and DNA protection. This chain is Nucleoid-associated protein TTHA1599, found in Thermus thermophilus (strain ATCC 27634 / DSM 579 / HB8).